The chain runs to 101 residues: Small ribosomal subunit protein uS14 (101 aa).

Belongs to the universal ribosomal protein uS14 family. Part of the 30S ribosomal subunit. Contacts proteins S3 and S10.

Its function is as follows. Binds 16S rRNA, required for the assembly of 30S particles and may also be responsible for determining the conformation of the 16S rRNA at the A site. The chain is Small ribosomal subunit protein uS14 from Aliivibrio fischeri (strain ATCC 700601 / ES114) (Vibrio fischeri).